The chain runs to 128 residues: Large-conductance mechanosensitive channel (128 aa).

The next 2 helical transmembrane spans lie at 10–30 (FAMR…GAFG) and 76–96 (GMFI…FLMI).

The protein belongs to the MscL family. Homopentamer.

The protein resides in the cell inner membrane. Its function is as follows. Channel that opens in response to stretch forces in the membrane lipid bilayer. May participate in the regulation of osmotic pressure changes within the cell. The polypeptide is Large-conductance mechanosensitive channel (Actinobacillus succinogenes (strain ATCC 55618 / DSM 22257 / CCUG 43843 / 130Z)).